A 954-amino-acid polypeptide reads, in one-letter code: Bifunctional glutamine synthetase adenylyltransferase/adenylyl-removing enzyme (954 aa).

Positions methionine 1–threonine 450 are adenylyl removase. The adenylyl transferase stretch occupies residues glycine 454–aspartate 954.

The protein belongs to the GlnE family. It depends on Mg(2+) as a cofactor.

The catalysed reaction is [glutamine synthetase]-O(4)-(5'-adenylyl)-L-tyrosine + phosphate = [glutamine synthetase]-L-tyrosine + ADP. The enzyme catalyses [glutamine synthetase]-L-tyrosine + ATP = [glutamine synthetase]-O(4)-(5'-adenylyl)-L-tyrosine + diphosphate. Involved in the regulation of glutamine synthetase GlnA, a key enzyme in the process to assimilate ammonia. When cellular nitrogen levels are high, the C-terminal adenylyl transferase (AT) inactivates GlnA by covalent transfer of an adenylyl group from ATP to specific tyrosine residue of GlnA, thus reducing its activity. Conversely, when nitrogen levels are low, the N-terminal adenylyl removase (AR) activates GlnA by removing the adenylyl group by phosphorolysis, increasing its activity. The regulatory region of GlnE binds the signal transduction protein PII (GlnB) which indicates the nitrogen status of the cell. The chain is Bifunctional glutamine synthetase adenylyltransferase/adenylyl-removing enzyme from Shewanella woodyi (strain ATCC 51908 / MS32).